A 106-amino-acid polypeptide reads, in one-letter code: Large ribosomal subunit protein uL24 (106 aa).

Belongs to the universal ribosomal protein uL24 family. Part of the 50S ribosomal subunit.

In terms of biological role, one of two assembly initiator proteins, it binds directly to the 5'-end of the 23S rRNA, where it nucleates assembly of the 50S subunit. One of the proteins that surrounds the polypeptide exit tunnel on the outside of the subunit. In Polaromonas sp. (strain JS666 / ATCC BAA-500), this protein is Large ribosomal subunit protein uL24.